Consider the following 635-residue polypeptide: 1-deoxy-D-xylulose-5-phosphate synthase (635 aa).

Residues His79 and 120-122 contribute to the thiamine diphosphate site; that span reads GHS. Asp151 lines the Mg(2+) pocket. Residues 152–153, Asn182, Tyr290, and Glu372 each bind thiamine diphosphate; that span reads GA. Asn182 contributes to the Mg(2+) binding site.

The protein belongs to the transketolase family. DXPS subfamily. In terms of assembly, homodimer. Requires Mg(2+) as cofactor. It depends on thiamine diphosphate as a cofactor.

It catalyses the reaction D-glyceraldehyde 3-phosphate + pyruvate + H(+) = 1-deoxy-D-xylulose 5-phosphate + CO2. It participates in metabolic intermediate biosynthesis; 1-deoxy-D-xylulose 5-phosphate biosynthesis; 1-deoxy-D-xylulose 5-phosphate from D-glyceraldehyde 3-phosphate and pyruvate: step 1/1. Functionally, catalyzes the acyloin condensation reaction between C atoms 2 and 3 of pyruvate and glyceraldehyde 3-phosphate to yield 1-deoxy-D-xylulose-5-phosphate (DXP). The polypeptide is 1-deoxy-D-xylulose-5-phosphate synthase (Stenotrophomonas maltophilia (strain K279a)).